The following is a 434-amino-acid chain: Glutamyl-tRNA reductase (434 aa).

Residues 49 to 52 (TCNR), Ser109, 114 to 116 (EPQ), and Gln120 each bind substrate. The active-site Nucleophile is Cys50. 189 to 194 (GAGEMC) contacts NADP(+).

The protein belongs to the glutamyl-tRNA reductase family. Homodimer.

The catalysed reaction is (S)-4-amino-5-oxopentanoate + tRNA(Glu) + NADP(+) = L-glutamyl-tRNA(Glu) + NADPH + H(+). Its pathway is porphyrin-containing compound metabolism; protoporphyrin-IX biosynthesis; 5-aminolevulinate from L-glutamyl-tRNA(Glu): step 1/2. Its function is as follows. Catalyzes the NADPH-dependent reduction of glutamyl-tRNA(Glu) to glutamate 1-semialdehyde (GSA). This chain is Glutamyl-tRNA reductase, found in Geotalea daltonii (strain DSM 22248 / JCM 15807 / FRC-32) (Geobacter daltonii).